The chain runs to 176 residues: CDP-archaeol synthase (176 aa).

4 helical membrane-spanning segments follow: residues Gly-41–Asn-61, Ile-73–Phe-93, Val-114–Phe-134, and Phe-138–Leu-158.

The protein belongs to the CDP-archaeol synthase family. Mg(2+) is required as a cofactor.

Its subcellular location is the cell membrane. The catalysed reaction is 2,3-bis-O-(geranylgeranyl)-sn-glycerol 1-phosphate + CTP + H(+) = CDP-2,3-bis-O-(geranylgeranyl)-sn-glycerol + diphosphate. It participates in membrane lipid metabolism; glycerophospholipid metabolism. Its function is as follows. Catalyzes the formation of CDP-2,3-bis-(O-geranylgeranyl)-sn-glycerol (CDP-archaeol) from 2,3-bis-(O-geranylgeranyl)-sn-glycerol 1-phosphate (DGGGP) and CTP. This reaction is the third ether-bond-formation step in the biosynthesis of archaeal membrane lipids. The polypeptide is CDP-archaeol synthase (Methanocorpusculum labreanum (strain ATCC 43576 / DSM 4855 / Z)).